A 145-amino-acid polypeptide reads, in one-letter code: Sporulation-specific cell division protein Francci3_3418 (145 aa).

The protein belongs to the SsgA family.

It is found in the cell septum. Involved in sporulation-specific cell division. This is Sporulation-specific cell division protein Francci3_3418 from Frankia casuarinae (strain DSM 45818 / CECT 9043 / HFP020203 / CcI3).